We begin with the raw amino-acid sequence, 411 residues long: Imidazolonepropionase (411 aa).

Positions 75 and 77 each coordinate Fe(3+). Residues His75 and His77 each coordinate Zn(2+). 3 residues coordinate 4-imidazolone-5-propanoate: Arg84, Tyr147, and His180. Tyr147 contacts N-formimidoyl-L-glutamate. His245 is a binding site for Fe(3+). His245 is a Zn(2+) binding site. Residue Gln248 coordinates 4-imidazolone-5-propanoate. Fe(3+) is bound at residue Asp320. Residue Asp320 coordinates Zn(2+). Residues Asn322 and Gly324 each contribute to the N-formimidoyl-L-glutamate site. Position 325 (Thr325) interacts with 4-imidazolone-5-propanoate.

The protein belongs to the metallo-dependent hydrolases superfamily. HutI family. Zn(2+) is required as a cofactor. Requires Fe(3+) as cofactor.

It is found in the cytoplasm. It catalyses the reaction 4-imidazolone-5-propanoate + H2O = N-formimidoyl-L-glutamate. Its pathway is amino-acid degradation; L-histidine degradation into L-glutamate; N-formimidoyl-L-glutamate from L-histidine: step 3/3. Its function is as follows. Catalyzes the hydrolytic cleavage of the carbon-nitrogen bond in imidazolone-5-propanoate to yield N-formimidoyl-L-glutamate. It is the third step in the universal histidine degradation pathway. This Aeromonas salmonicida (strain A449) protein is Imidazolonepropionase.